Here is a 1215-residue protein sequence, read N- to C-terminus: Reverse gyrase 2 (1215 aa).

The segment at 3 to 44 (GGVNAVYMGLCYNCGGNIDEDRLEKGLPCARCLPSPPRRATP) adopts an RG N-terminal-type zinc-finger fold. Residues cysteine 13, cysteine 16, cysteine 31, and cysteine 34 each contribute to the Zn(2+) site. Residues glutamine 89 and 106 to 113 (APTGVGKS) contribute to the ATP site. The Helicase ATP-binding domain occupies 93–249 (AKRLVKGDSF…SLVKARLKLY (157 aa)). A DEAD box motif is present at residues 209 to 212 (DDVD). The topoisomerase I stretch occupies residues 614-1215 (VRVKTTLLVV…TGDVMGQSEA (602 aa)). One can recognise a Toprim domain in the interval 618-783 (TTLLVVESPT…NVRRGRFHEV (166 aa)). Residue glutamate 624 coordinates Mg(2+). Residues 702–729 (IKRCLDCGAQHTSSSPFCPRCGSPRQVD) form an RG C-terminal-type zinc finger. Positions 705, 708, 719, and 722 each coordinate Zn(2+). Aspartate 752 contributes to the Mg(2+) binding site. Residues 799 to 1200 (EKSLIEAQKV…SVWRMVDEAV (402 aa)) enclose the Topo IA-type catalytic domain. Tyrosine 943 serves as the catalytic O-(5'-phospho-DNA)-tyrosine intermediate.

This sequence in the N-terminal section; belongs to the DEAD box helicase family. DDVD subfamily. In the C-terminal section; belongs to the type IA topoisomerase family. Monomer. Zn(2+) is required as a cofactor. The cofactor is Mg(2+).

It is found in the cytoplasm. The catalysed reaction is ATP + H2O = ADP + phosphate + H(+). Modifies the topological state of DNA by introducing positive supercoils in an ATP-dependent process, increasing the linking number in steps of +1. Binds to single-stranded DNA, transiently cleaves and then rejoins the ends, introducing a positive supercoil in the process. The scissile phosphodiester is attacked by the catalytic tyrosine of the enzyme, resulting in the formation of a DNA-(5'-phosphotyrosyl)-enzyme intermediate. Probably involved in rewinding DNA strands in regions of the chromosome that have opened up to allow replication, transcription, DNA repair and/or for DNA protection. This chain is Reverse gyrase 2, found in Aeropyrum pernix (strain ATCC 700893 / DSM 11879 / JCM 9820 / NBRC 100138 / K1).